The chain runs to 1115 residues: Tbc2 translation factor, chloroplastic (1115 aa).

2 stretches are compositionally biased toward low complexity: residues 69-87 (TASV…QLSS) and 163-175 (RRAG…SGRA). Disordered regions lie at residues 69–90 (TASV…SKAL) and 163–210 (RRAG…SSSS). A compositionally biased stretch (gly residues) spans 176–186 (RGWGSGPGRNG). Residues 187–210 (SGSSSVSVNGSGSSSNGSSSSSSS) are compositionally biased toward low complexity. 9 consecutive repeat copies span residues 483–521 (LVLE…WVEA), 607–645 (LDLT…WMQA), 685–723 (LAAT…WVGA), 724–763 (LLEE…AARL), 764–803 (MWRS…TQLC), 804–842 (LQAA…WLTR), 843–880 (MLLS…WLRR), 990–1029 (PAAH…QAAW), and 1030–1068 (WAAS…WLQA). The segment at 483 to 1068 (LVLELSRARL…LRPPPEWLQA (586 aa)) is 9 X 38 AA approximate repeats.

As to quaternary structure, part of a 400 kDa complex which is not stably associated with RNA.

It localises to the plastid. The protein localises to the chloroplast stroma. Its function is as follows. Required for expression of the chloroplast encoded psbC mRNA, most likely for translation initiation. Interacts with the 5'-UTR of psbC. This chain is Tbc2 translation factor, chloroplastic (TBC2), found in Chlamydomonas reinhardtii (Chlamydomonas smithii).